Reading from the N-terminus, the 464-residue chain is UDP-N-acetylmuramate--L-alanine ligase (464 aa).

111 to 117 (GAHGKTT) is a binding site for ATP.

This sequence belongs to the MurCDEF family.

It localises to the cytoplasm. It carries out the reaction UDP-N-acetyl-alpha-D-muramate + L-alanine + ATP = UDP-N-acetyl-alpha-D-muramoyl-L-alanine + ADP + phosphate + H(+). The protein operates within cell wall biogenesis; peptidoglycan biosynthesis. Functionally, cell wall formation. The protein is UDP-N-acetylmuramate--L-alanine ligase of Dictyoglomus turgidum (strain DSM 6724 / Z-1310).